Here is a 178-residue protein sequence, read N- to C-terminus: Nicotinamide-nucleotide adenylyltransferase (178 aa).

Belongs to the archaeal NMN adenylyltransferase family.

The protein resides in the cytoplasm. The catalysed reaction is beta-nicotinamide D-ribonucleotide + ATP + H(+) = diphosphate + NAD(+). The protein operates within cofactor biosynthesis; NAD(+) biosynthesis; NAD(+) from nicotinamide D-ribonucleotide: step 1/1. This chain is Nicotinamide-nucleotide adenylyltransferase, found in Pyrobaculum neutrophilum (strain DSM 2338 / JCM 9278 / NBRC 100436 / V24Sta) (Thermoproteus neutrophilus).